The following is a 71-amino-acid chain: Conotoxin Vc6.12 (71 aa).

An N-terminal signal peptide occupies residues 1-19 (MQKLIILLLVAAVLMSTQA). The propeptide occupies 20–43 (LFQEKRPMKKINFLSKGKTDAEKQ). 3 cysteine pairs are disulfide-bonded: Cys48–Cys62, Cys55–Cys66, and Cys61–Cys70.

It belongs to the conotoxin O2 superfamily. As to expression, expressed by the venom duct.

The protein localises to the secreted. Its function is as follows. Inhibits voltage-gated ion channels. The protein is Conotoxin Vc6.12 of Conus victoriae (Queen Victoria cone).